Reading from the N-terminus, the 112-residue chain is Urease subunit beta (112 aa).

This sequence belongs to the urease beta subunit family. In terms of assembly, heterotrimer of UreA (gamma), UreB (beta) and UreC (alpha) subunits. Three heterotrimers associate to form the active enzyme.

The protein resides in the cytoplasm. The enzyme catalyses urea + 2 H2O + H(+) = hydrogencarbonate + 2 NH4(+). The protein operates within nitrogen metabolism; urea degradation; CO(2) and NH(3) from urea (urease route): step 1/1. The polypeptide is Urease subunit beta (Polaromonas sp. (strain JS666 / ATCC BAA-500)).